Consider the following 97-residue polypeptide: Cell division topological specificity factor (97 aa).

The protein belongs to the MinE family.

Functionally, prevents the cell division inhibition by proteins MinC and MinD at internal division sites while permitting inhibition at polar sites. This ensures cell division at the proper site by restricting the formation of a division septum at the midpoint of the long axis of the cell. The chain is Cell division topological specificity factor from Rhodospirillum centenum (strain ATCC 51521 / SW).